A 601-amino-acid chain; its full sequence is Urocanate hydratase (601 aa).

Residues 63-64 (GG) and Gln141 contribute to the NAD(+) site. Residues 172–201 (SDRPSALLKQGLSPEGTAPGSGRSSAQVPG) are insert. The disordered stretch occupies residues 179 to 200 (LKQGLSPEGTAPGSGRSSAQVP). Residues 216–218 (GMG), Glu236, 282–283 (NA), 307–311 (QTSAH), 317–318 (YL), and Tyr368 each bind NAD(+). Cys456 is an active-site residue. Gly538 is a binding site for NAD(+).

The protein belongs to the urocanase family. NAD(+) is required as a cofactor.

The protein localises to the cytoplasm. The catalysed reaction is 4-imidazolone-5-propanoate = trans-urocanate + H2O. It participates in amino-acid degradation; L-histidine degradation into L-glutamate; N-formimidoyl-L-glutamate from L-histidine: step 2/3. Functionally, catalyzes the conversion of urocanate to 4-imidazolone-5-propionate. In Ralstonia nicotianae (strain ATCC BAA-1114 / GMI1000) (Ralstonia solanacearum), this protein is Urocanate hydratase.